Reading from the N-terminus, the 201-residue chain is Small ribosomal subunit protein uS5 (201 aa).

A disordered region spans residues 1–27 (MAGPQRRGSGAGGGERRDRKGRDGGAA). Residues 14–23 (GERRDRKGRD) are compositionally biased toward basic and acidic residues. Residues 34–97 (YVERVVAINR…EEAKKHFFKV (64 aa)) enclose the S5 DRBM domain.

The protein belongs to the universal ribosomal protein uS5 family. Part of the 30S ribosomal subunit. Contacts proteins S4 and S8.

Its function is as follows. With S4 and S12 plays an important role in translational accuracy. Functionally, located at the back of the 30S subunit body where it stabilizes the conformation of the head with respect to the body. The polypeptide is Small ribosomal subunit protein uS5 (Streptomyces avermitilis (strain ATCC 31267 / DSM 46492 / JCM 5070 / NBRC 14893 / NCIMB 12804 / NRRL 8165 / MA-4680)).